The following is a 99-amino-acid chain: A-type ATP synthase subunit F (99 aa).

This sequence belongs to the V-ATPase F subunit family. In terms of assembly, has multiple subunits with at least A(3), B(3), C, D, E, F, H, I and proteolipid K(x).

It localises to the cell membrane. Component of the A-type ATP synthase that produces ATP from ADP in the presence of a proton gradient across the membrane. The sequence is that of A-type ATP synthase subunit F from Methanocella arvoryzae (strain DSM 22066 / NBRC 105507 / MRE50).